Reading from the N-terminus, the 226-residue chain is Isoprenyl transferase (226 aa).

Aspartate 12 is an active-site residue. Aspartate 12 provides a ligand contact to Mg(2+). Residues 13-16 (GNAR), tryptophan 17, lysine 25, histidine 29, and 57-59 (SSE) each bind substrate. Asparagine 60 serves as the catalytic Proton acceptor. Substrate-binding positions include tryptophan 61, arginine 63, arginine 174, and 180-182 (RIS). Residue glutamate 193 coordinates Mg(2+).

Belongs to the UPP synthase family. Homodimer. Requires Mg(2+) as cofactor.

In terms of biological role, catalyzes the condensation of isopentenyl diphosphate (IPP) with allylic pyrophosphates generating different type of terpenoids. The chain is Isoprenyl transferase from Rickettsia sibirica (strain ATCC VR-151 / 246).